Here is a 265-residue protein sequence, read N- to C-terminus: Dehydrin COR47 (265 aa).

Residues 1–14 (MAEEYKNNVPEHET) show a composition bias toward basic and acidic residues. Residues 1–265 (MAEEYKNNVP…EVKKEKESDD (265 aa)) form a disordered region. N-acetylalanine is present on alanine 2. The span at 16–28 (TVATEESPATTTE) shows a compositional bias: polar residues. Basic and acidic residues predominate over residues 29–47 (VTDRGLFDFLGKKEEEVKP). Serine 64 bears the Phosphoserine mark. Positions 69-79 (AAEHEEVKENK) are enriched in basic and acidic residues. Phosphothreonine is present on threonine 90. Composition is skewed to basic and acidic residues over residues 96-105 (NKPSVIEKLH) and 129-156 (IVEG…KTAE). Copy 1 of the repeat occupies 133-153 (EEDKKGLVEKIKEKLPGHHDK). Positions 133–251 (EEDKKGLVEK…KEKLPGYHAK (119 aa)) are 3 X 21 AA repeats, Lys-rich. Over residues 160–172 (PVSTTIPVPVSES) the composition is skewed to low complexity. 2 stretches are compositionally biased toward basic and acidic residues: residues 173–204 (VVEH…KAED) and 227–265 (PVEH…ESDD). 2 repeat units span residues 180 to 200 (EEEK…HHDE) and 231 to 251 (PEEK…YHAK).

This sequence belongs to the plant dehydrin family.

The polypeptide is Dehydrin COR47 (COR47) (Arabidopsis thaliana (Mouse-ear cress)).